Here is a 160-residue protein sequence, read N- to C-terminus: Dr hemagglutinin structural subunit (160 aa).

An N-terminal signal peptide occupies residues 1–21 (MKKLAIMAAASMVFAVSSAHA). Residues 22–75 (GFTPSGTTGTTKLTVTEECQVRVGDLTVAKTRGQLTDAAPIGPVTVQALGCDAR) form a receptor-binding region.

The protein belongs to the Dr-adhesin family.

The protein localises to the fimbrium. Hemagglutinins of uropathogenic E.coli mediate adherence to the upper urinary tract. These adhesins bind to the Dr blood group antigen and also agglutinate human erythrocytes in the presence of D-mannose (mannose-resistant hemagglutination (MRHA)). The protein is Dr hemagglutinin structural subunit (draA) of Escherichia coli.